The chain runs to 197 residues: Rac-like GTP-binding protein 6 (197 aa).

Gly-13–Thr-20 provides a ligand contact to GTP. Residues Tyr-35–Phe-43 carry the Effector region motif. Residues Asp-60–Gln-64 and Thr-118–Asp-121 each bind GTP. Cys-194 is modified (cysteine methyl ester). The S-geranylgeranyl cysteine moiety is linked to residue Cys-194. A propeptide spans Ser-195–Leu-197 (removed in mature form).

Belongs to the small GTPase superfamily. Rho family.

The protein resides in the cytoplasm. The protein localises to the membrane. In terms of biological role, inactive GDP-bound Rho GTPases reside in the cytosol, are found in a complex with Rho GDP-dissociation inhibitors (Rho GDIs), and are released from the GDI protein in order to translocate to membranes upon activation. This Oryza sativa subsp. japonica (Rice) protein is Rac-like GTP-binding protein 6 (RAC6).